Reading from the N-terminus, the 290-residue chain is Bifunctional protein FolD 1 (290 aa).

NADP(+) contacts are provided by residues 164–166 (GRS), I193, and I236.

It belongs to the tetrahydrofolate dehydrogenase/cyclohydrolase family. In terms of assembly, homodimer.

The catalysed reaction is (6R)-5,10-methylene-5,6,7,8-tetrahydrofolate + NADP(+) = (6R)-5,10-methenyltetrahydrofolate + NADPH. The enzyme catalyses (6R)-5,10-methenyltetrahydrofolate + H2O = (6R)-10-formyltetrahydrofolate + H(+). Its pathway is one-carbon metabolism; tetrahydrofolate interconversion. Functionally, catalyzes the oxidation of 5,10-methylenetetrahydrofolate to 5,10-methenyltetrahydrofolate and then the hydrolysis of 5,10-methenyltetrahydrofolate to 10-formyltetrahydrofolate. The polypeptide is Bifunctional protein FolD 1 (Geobacter metallireducens (strain ATCC 53774 / DSM 7210 / GS-15)).